Reading from the N-terminus, the 251-residue chain is POU class 2 homeobox associating factor 3 (251 aa).

One can recognise an OCA domain in the interval 5–27; that stretch reads PKVYQGVRVKITVKELLQQRRAH. The disordered stretch occupies residues 24–45; sequence RRAHQAASGGTRSGGSSVHLSD. Residues 31–40 show a composition bias toward low complexity; that stretch reads SGGTRSGGSS.

It belongs to the POU2AF family. In terms of assembly, interacts with POU2F3 in a DNA-dependent manner; this interaction increases POU2F3 transactivation activity. Expressed in many cell types of epithelial, mesenchymal and hematopoietic origins. Expressed in tufs cells.

Its subcellular location is the cytoplasm. The protein localises to the nucleus. Its function is as follows. Transcriptional coactivator that specifically associates with POU2F3. This complex drives the development of tuft cells, a rare a rare chemosensory cells that coordinate immune and neural functions within mucosal epithelial tissues. This is POU class 2 homeobox associating factor 3 from Homo sapiens (Human).